A 181-amino-acid polypeptide reads, in one-letter code: ATP synthase subunit delta (181 aa).

It belongs to the ATPase delta chain family. F-type ATPases have 2 components, F(1) - the catalytic core - and F(0) - the membrane proton channel. F(1) has five subunits: alpha(3), beta(3), gamma(1), delta(1), epsilon(1). F(0) has three main subunits: a(1), b(2) and c(10-14). The alpha and beta chains form an alternating ring which encloses part of the gamma chain. F(1) is attached to F(0) by a central stalk formed by the gamma and epsilon chains, while a peripheral stalk is formed by the delta and b chains.

It is found in the cell inner membrane. Its function is as follows. F(1)F(0) ATP synthase produces ATP from ADP in the presence of a proton or sodium gradient. F-type ATPases consist of two structural domains, F(1) containing the extramembraneous catalytic core and F(0) containing the membrane proton channel, linked together by a central stalk and a peripheral stalk. During catalysis, ATP synthesis in the catalytic domain of F(1) is coupled via a rotary mechanism of the central stalk subunits to proton translocation. In terms of biological role, this protein is part of the stalk that links CF(0) to CF(1). It either transmits conformational changes from CF(0) to CF(1) or is implicated in proton conduction. The sequence is that of ATP synthase subunit delta from Desulfotalea psychrophila (strain LSv54 / DSM 12343).